The primary structure comprises 201 residues: Outer-membrane lipoprotein carrier protein (201 aa).

An N-terminal signal peptide occupies residues 1-21; sequence MKKVLLTVCAIALFGSQAAWA.

This sequence belongs to the LolA family. Monomer.

It localises to the periplasm. Functionally, participates in the translocation of lipoproteins from the inner membrane to the outer membrane. Only forms a complex with a lipoprotein if the residue after the N-terminal Cys is not an aspartate (The Asp acts as a targeting signal to indicate that the lipoprotein should stay in the inner membrane). The polypeptide is Outer-membrane lipoprotein carrier protein (Proteus mirabilis (strain HI4320)).